A 408-amino-acid chain; its full sequence is Imidazolonepropionase (408 aa).

Fe(3+) is bound by residues His73 and His75. Zn(2+) contacts are provided by His73 and His75. Residues Arg82, Tyr145, and His178 each coordinate 4-imidazolone-5-propanoate. Tyr145 contributes to the N-formimidoyl-L-glutamate binding site. A Fe(3+)-binding site is contributed by His243. His243 provides a ligand contact to Zn(2+). Gln246 is a binding site for 4-imidazolone-5-propanoate. Asp318 serves as a coordination point for Fe(3+). Asp318 serves as a coordination point for Zn(2+). Residues Asn320 and Gly322 each coordinate N-formimidoyl-L-glutamate. Ser323 lines the 4-imidazolone-5-propanoate pocket.

The protein belongs to the metallo-dependent hydrolases superfamily. HutI family. It depends on Zn(2+) as a cofactor. Requires Fe(3+) as cofactor.

It is found in the cytoplasm. It catalyses the reaction 4-imidazolone-5-propanoate + H2O = N-formimidoyl-L-glutamate. The protein operates within amino-acid degradation; L-histidine degradation into L-glutamate; N-formimidoyl-L-glutamate from L-histidine: step 3/3. Catalyzes the hydrolytic cleavage of the carbon-nitrogen bond in imidazolone-5-propanoate to yield N-formimidoyl-L-glutamate. It is the third step in the universal histidine degradation pathway. This Shewanella woodyi (strain ATCC 51908 / MS32) protein is Imidazolonepropionase.